The following is a 462-amino-acid chain: tRNA-2-methylthio-N(6)-dimethylallyladenosine synthase (462 aa).

The MTTase N-terminal domain occupies 2 to 117 (KRYFIHTFGC…LPDIIGRVSA (116 aa)). 6 residues coordinate [4Fe-4S] cluster: C11, C47, C80, C157, C161, and C164. Residues 143 to 372 (SRGKVTEFVT…QKLQRRISGE (230 aa)) enclose the Radical SAM core domain. The TRAM domain occupies 375-437 (AALVGSEVEV…PNQLAGKQVA (63 aa)).

This sequence belongs to the methylthiotransferase family. MiaB subfamily. As to quaternary structure, monomer. The cofactor is [4Fe-4S] cluster.

The protein resides in the cytoplasm. The catalysed reaction is N(6)-dimethylallyladenosine(37) in tRNA + (sulfur carrier)-SH + AH2 + 2 S-adenosyl-L-methionine = 2-methylsulfanyl-N(6)-dimethylallyladenosine(37) in tRNA + (sulfur carrier)-H + 5'-deoxyadenosine + L-methionine + A + S-adenosyl-L-homocysteine + 2 H(+). Its function is as follows. Catalyzes the methylthiolation of N6-(dimethylallyl)adenosine (i(6)A), leading to the formation of 2-methylthio-N6-(dimethylallyl)adenosine (ms(2)i(6)A) at position 37 in tRNAs that read codons beginning with uridine. This Myxococcus xanthus (strain DK1622) protein is tRNA-2-methylthio-N(6)-dimethylallyladenosine synthase.